We begin with the raw amino-acid sequence, 293 residues long: MITFSDLLLKLQTFWKEQGCLIVQPYDIPAGAGTFHPATLLRSLDSKPWSVAYVAPSRRPTDGRYGENPNRLGSYYQFQVIIKPSPDNIQELYLKSLEYLGLNLKEHDIRFVEDNWESPTLGAWGLGWEVWLDGMEVTQFTYFQQVGGIACDPVAVEITYGTERLAMYLQEVENVFDIEWSQGVSYADVHLEGEYEFSKYHFEVADTQRLLTLFEEAQGESKRCLEALLPLPAYDWTMLSSHMFNVLDARKAISATERQNYILKIRELAKGCAELYKGQEEEREARLARAKNR.

Belongs to the class-II aminoacyl-tRNA synthetase family. Tetramer of two alpha and two beta subunits.

The protein localises to the cytoplasm. It catalyses the reaction tRNA(Gly) + glycine + ATP = glycyl-tRNA(Gly) + AMP + diphosphate. The chain is Glycine--tRNA ligase alpha subunit from Wolinella succinogenes (strain ATCC 29543 / DSM 1740 / CCUG 13145 / JCM 31913 / LMG 7466 / NCTC 11488 / FDC 602W) (Vibrio succinogenes).